Here is a 482-residue protein sequence, read N- to C-terminus: O-phosphoseryl-tRNA(Sec) selenium transferase (482 aa).

The interval 1-36 (MKSSFGKKEGEYSRLVSKSSNKLLNSLWEKKQIPEE) is tetramerization. Arg-69 is a pyridoxal 5'-phosphate binding site. The segment at 90–100 (GRSGNLLEIQP) is phosphate loop (P-loop). Substrate-binding residues include Arg-91, Ser-92, and Gln-99. An N6-(pyridoxal phosphate)lysine modification is found at Lys-277. Arg-306 is a binding site for substrate. A tRNA-binding site is contributed by Arg-388. Residues 461–482 (DRRGGSSGRRVPMNESFDMEND) form a disordered region.

It belongs to the SepSecS family. As to quaternary structure, homotetramer formed by a catalytic dimer and a non-catalytic dimer serving as a binding platform that orients tRNASec for catalysis. Each tetramer binds the CCA ends of two tRNAs which point to the active sites of the catalytic dimer. Pyridoxal 5'-phosphate is required as a cofactor.

The protein resides in the cytoplasm. It carries out the reaction O-phospho-L-seryl-tRNA(Sec) + selenophosphate + H2O = L-selenocysteinyl-tRNA(Sec) + 2 phosphate. Its pathway is aminoacyl-tRNA biosynthesis; selenocysteinyl-tRNA(Sec) biosynthesis; selenocysteinyl-tRNA(Sec) from L-seryl-tRNA(Sec) (archaeal/eukaryal route): step 2/2. Converts O-phosphoseryl-tRNA(Sec) to selenocysteinyl-tRNA(Sec) required for selenoprotein biosynthesis. The chain is O-phosphoseryl-tRNA(Sec) selenium transferase (secs-1) from Caenorhabditis briggsae.